We begin with the raw amino-acid sequence, 622 residues long: Phosphatidylinositol 4-kinase gamma 6 (622 aa).

The Ubiquitin-like; degenerate domain maps to 38–95 (RRVFVQTDTGCVLGVELDRNDNVHTVKKRLQIAFNFPTEESSLTFGDMVLKNDLSAVR). One can recognise a PI3K/PI4K catalytic domain in the interval 158–459 (GVEPIPVNGG…LTTEQDVLSP (302 aa)). Positions 164–170 (VNGGLGG) are G-loop. ATP is bound by residues 165 to 171 (NGGLGGA), K186, and 277 to 280 (QKFV). Residues 310 to 318 (LNTDRHGGN) form a catalytic loop region. The activation loop stretch occupies residues 339–365 (PIDHGLCLPETLEDPYFEWIHWPQASI). D341 provides a ligand contact to ATP. Phosphoserine is present on S565.

It belongs to the PI3/PI4-kinase family. Type II PI4K subfamily.

It catalyses the reaction a 1,2-diacyl-sn-glycero-3-phospho-(1D-myo-inositol) + ATP = a 1,2-diacyl-sn-glycero-3-phospho-(1D-myo-inositol 4-phosphate) + ADP + H(+). Its function is as follows. The phosphorylation of phosphatidylinositol (PI) to PI4P is the first committed step in the generation of phosphatidylinositol 4,5-bisphosphate (PIP2), a precursor of the second messenger inositol 1,4,5-trisphosphate (InsP3). The sequence is that of Phosphatidylinositol 4-kinase gamma 6 (PI4KG6) from Arabidopsis thaliana (Mouse-ear cress).